The primary structure comprises 1228 residues: DNA-directed RNA polymerase subunit beta (1228 aa).

Belongs to the RNA polymerase beta chain family. The RNAP catalytic core consists of 2 alpha, 1 beta, 1 beta' and 1 omega subunit. When a sigma factor is associated with the core the holoenzyme is formed, which can initiate transcription.

It carries out the reaction RNA(n) + a ribonucleoside 5'-triphosphate = RNA(n+1) + diphosphate. Its function is as follows. DNA-dependent RNA polymerase catalyzes the transcription of DNA into RNA using the four ribonucleoside triphosphates as substrates. In Leptospira biflexa serovar Patoc (strain Patoc 1 / Ames), this protein is DNA-directed RNA polymerase subunit beta.